The primary structure comprises 259 residues: DNA utilization protein HofM (259 aa).

Functionally, required for the use of extracellular DNA as a nutrient. The sequence is that of DNA utilization protein HofM (hofM) from Escherichia coli (strain K12).